A 75-amino-acid polypeptide reads, in one-letter code: NECIRKWLSCVDRKNDCCEGLECYKRRHSFEVCVPIPGFCLVKWKQCDGRERDCCAGLECWKRSGNKSSVCAPIA.

Intrachain disulfides connect Cys3–Cys18, Cys10–Cys23, Cys17–Cys33, Cys40–Cys55, Cys47–Cys60, and Cys54–Cys71. Domain repeat units follow at residues 3 to 33 and 40 to 71; these read CIRKWLSCVDRKNDCCEGLECYKRRHSFEVC and CLVKWKQCDGRERDCCAGLECWKRSGNKSSVC. The interval 3-71 is 2 X approximate repeats with cysteine pattern C-C-CC-C-C; that stretch reads CIRKWLSCVD…KRSGNKSSVC (69 aa).

This sequence belongs to the psalmotoxin-1 family. Double-knot toxin subfamily. Expressed by the venom gland.

Its subcellular location is the secreted. Functionally, this toxin potently and selectively inhibits ASIC1a, an isoform of the gene ASIC1. It incompletely inhibits ASIC1a activation in a pH-independent and slowly reversible manner. This toxin acts by binding to and stabilizing the closed state of the channel, thereby impeding the transition into a conducting state. This toxin may bind to the acidic pocket of ASIC1a, since mutation of a key residue of this pocket (Arg-350) abolishes the ability of the toxin to inhibit ASIC1a. In vivo, this toxin protects the brain from neuronal injury when administered up to 8 hours after stroke onset. This chain is Pi-hexatoxin-Hi1d, found in Hadronyche infensa (Fraser island funnel-web spider).